A 143-amino-acid chain; its full sequence is UPF0651 protein P31B10.02, mitochondrial (143 aa).

An Oxidoreductase-like domain is found at Ile-48–Arg-93.

This sequence belongs to the UPF0651 family.

Its subcellular location is the mitochondrion. The protein is UPF0651 protein P31B10.02, mitochondrial of Schizosaccharomyces pombe (strain 972 / ATCC 24843) (Fission yeast).